The primary structure comprises 231 residues: PIAGSMILAAILLKLGGYGIIRLMQIFPTTKTDVFLPFIVLALWGAILANLTCLQQTDLKSLIAYSSISHMGLVVAAIIIQTPWGLSGAMALMIAHGFTSSALFCLANTTYERTHTRILILTRGLHNMMPMATTWWLMANLMNIAIPPSMNFTGELLILSTLFNWCPTTIIMLGLSMLITASYSLHMFLSTQMGPTLINNLTEPTHSREHLLMTLHLIPLLMISFKPELVT.

7 helical membrane passes run 1–21 (PIAG…YGII), 34–54 (VFLP…LTCL), 63–85 (IAYS…TPWG), 89–111 (AMAL…NTTY), 128–148 (MMPM…AIPP), 169–189 (TIIM…HMFL), and 211–231 (LLMT…ELVT).

It belongs to the complex I subunit 4 family.

Its subcellular location is the mitochondrion membrane. It carries out the reaction a ubiquinone + NADH + 5 H(+)(in) = a ubiquinol + NAD(+) + 4 H(+)(out). In terms of biological role, core subunit of the mitochondrial membrane respiratory chain NADH dehydrogenase (Complex I) that is believed to belong to the minimal assembly required for catalysis. Complex I functions in the transfer of electrons from NADH to the respiratory chain. The immediate electron acceptor for the enzyme is believed to be ubiquinone. This chain is NADH-ubiquinone oxidoreductase chain 4 (MT-ND4), found in Sistrurus miliarius (Pigmy rattlesnake).